Here is a 565-residue protein sequence, read N- to C-terminus: Oxygen-dependent choline dehydrogenase (565 aa).

Residue 6–35 (DYIIVGAGSAGNTLATRLTEDAGVTVLLLE) participates in FAD binding. The tract at residues 182 to 201 (QQEGFGPMDRTVTKNGRRSS) is disordered. Histidine 475 serves as the catalytic Proton acceptor.

It belongs to the GMC oxidoreductase family. The cofactor is FAD.

The catalysed reaction is choline + A = betaine aldehyde + AH2. It carries out the reaction betaine aldehyde + NAD(+) + H2O = glycine betaine + NADH + 2 H(+). It functions in the pathway amine and polyamine biosynthesis; betaine biosynthesis via choline pathway; betaine aldehyde from choline (cytochrome c reductase route): step 1/1. Its function is as follows. Involved in the biosynthesis of the osmoprotectant glycine betaine. Catalyzes the oxidation of choline to betaine aldehyde and betaine aldehyde to glycine betaine at the same rate. This Pseudomonas putida (strain ATCC 47054 / DSM 6125 / CFBP 8728 / NCIMB 11950 / KT2440) protein is Oxygen-dependent choline dehydrogenase.